The sequence spans 369 residues: Phenylalanine--tRNA ligase alpha subunit (369 aa).

E269 is a binding site for Mg(2+).

The protein belongs to the class-II aminoacyl-tRNA synthetase family. Phe-tRNA synthetase alpha subunit type 1 subfamily. In terms of assembly, tetramer of two alpha and two beta subunits. Mg(2+) is required as a cofactor.

Its subcellular location is the cytoplasm. The catalysed reaction is tRNA(Phe) + L-phenylalanine + ATP = L-phenylalanyl-tRNA(Phe) + AMP + diphosphate + H(+). This Brucella ovis (strain ATCC 25840 / 63/290 / NCTC 10512) protein is Phenylalanine--tRNA ligase alpha subunit.